The chain runs to 439 residues: Xylose isomerase (439 aa).

Residues histidine 101 and aspartate 104 contribute to the active site. Mg(2+) is bound by residues glutamate 232, glutamate 268, histidine 271, aspartate 296, aspartate 307, aspartate 309, and aspartate 339.

The protein belongs to the xylose isomerase family. In terms of assembly, homotetramer. The cofactor is Mg(2+).

The protein resides in the cytoplasm. It catalyses the reaction alpha-D-xylose = alpha-D-xylulofuranose. The chain is Xylose isomerase from Serratia proteamaculans (strain 568).